Consider the following 602-residue polypeptide: Elongation factor 4 (602 aa).

Residues 7–189 (RNIRNFSIIA…AIVQRIPAPQ (183 aa)) form the tr-type G domain. GTP is bound by residues 19 to 24 (DHGKST) and 136 to 139 (NKID).

This sequence belongs to the TRAFAC class translation factor GTPase superfamily. Classic translation factor GTPase family. LepA subfamily.

Its subcellular location is the cell inner membrane. It catalyses the reaction GTP + H2O = GDP + phosphate + H(+). Functionally, required for accurate and efficient protein synthesis under certain stress conditions. May act as a fidelity factor of the translation reaction, by catalyzing a one-codon backward translocation of tRNAs on improperly translocated ribosomes. Back-translocation proceeds from a post-translocation (POST) complex to a pre-translocation (PRE) complex, thus giving elongation factor G a second chance to translocate the tRNAs correctly. Binds to ribosomes in a GTP-dependent manner. This Xylella fastidiosa (strain M23) protein is Elongation factor 4.